A 276-amino-acid chain; its full sequence is Diaminopimelate epimerase (276 aa).

Substrate contacts are provided by Asn-13, Gln-46, and Asn-66. Cys-75 (proton donor) is an active-site residue. Residues 76 to 77 (GN), Asn-159, Asn-192, and 210 to 211 (ER) each bind substrate. Cys-219 acts as the Proton acceptor in catalysis. Residue 220–221 (GS) coordinates substrate.

It belongs to the diaminopimelate epimerase family. Homodimer.

The protein localises to the cytoplasm. The catalysed reaction is (2S,6S)-2,6-diaminopimelate = meso-2,6-diaminopimelate. The protein operates within amino-acid biosynthesis; L-lysine biosynthesis via DAP pathway; DL-2,6-diaminopimelate from LL-2,6-diaminopimelate: step 1/1. Its function is as follows. Catalyzes the stereoinversion of LL-2,6-diaminopimelate (L,L-DAP) to meso-diaminopimelate (meso-DAP), a precursor of L-lysine and an essential component of the bacterial peptidoglycan. This is Diaminopimelate epimerase from Pseudoalteromonas atlantica (strain T6c / ATCC BAA-1087).